The primary structure comprises 407 residues: Imidazolonepropionase (407 aa).

2 residues coordinate Fe(3+): H68 and H70. The Zn(2+) site is built by H68 and H70. 4-imidazolone-5-propanoate-binding residues include R77, Y140, and H173. Residue Y140 participates in N-formimidoyl-L-glutamate binding. Residue H238 participates in Fe(3+) binding. Position 238 (H238) interacts with Zn(2+). 4-imidazolone-5-propanoate is bound at residue Q241. D313 is a binding site for Fe(3+). D313 contributes to the Zn(2+) binding site. N315 and G317 together coordinate N-formimidoyl-L-glutamate. T318 lines the 4-imidazolone-5-propanoate pocket.

Belongs to the metallo-dependent hydrolases superfamily. HutI family. Zn(2+) serves as cofactor. Requires Fe(3+) as cofactor.

The protein localises to the cytoplasm. It carries out the reaction 4-imidazolone-5-propanoate + H2O = N-formimidoyl-L-glutamate. It participates in amino-acid degradation; L-histidine degradation into L-glutamate; N-formimidoyl-L-glutamate from L-histidine: step 3/3. Its function is as follows. Catalyzes the hydrolytic cleavage of the carbon-nitrogen bond in imidazolone-5-propanoate to yield N-formimidoyl-L-glutamate. It is the third step in the universal histidine degradation pathway. This Burkholderia cenocepacia (strain ATCC BAA-245 / DSM 16553 / LMG 16656 / NCTC 13227 / J2315 / CF5610) (Burkholderia cepacia (strain J2315)) protein is Imidazolonepropionase.